Consider the following 259-residue polypeptide: Tryptophan synthase alpha chain (259 aa).

Active-site proton acceptor residues include glutamate 42 and aspartate 53.

It belongs to the TrpA family. Tetramer of two alpha and two beta chains.

It catalyses the reaction (1S,2R)-1-C-(indol-3-yl)glycerol 3-phosphate + L-serine = D-glyceraldehyde 3-phosphate + L-tryptophan + H2O. It participates in amino-acid biosynthesis; L-tryptophan biosynthesis; L-tryptophan from chorismate: step 5/5. The alpha subunit is responsible for the aldol cleavage of indoleglycerol phosphate to indole and glyceraldehyde 3-phosphate. This Erythrobacter litoralis (strain HTCC2594) protein is Tryptophan synthase alpha chain.